The primary structure comprises 266 residues: Metallo-beta-lactamase VIM-1 (266 aa).

Positions 1 to 20 (MLKVISSLLVYMTASVMAVA) are cleaved as a signal peptide. Zn(2+) is bound by residues histidine 114, histidine 116, aspartate 118, histidine 179, cysteine 198, and histidine 240.

The protein belongs to the metallo-beta-lactamase superfamily. Class-B beta-lactamase family. In terms of assembly, monomer. Zn(2+) serves as cofactor.

It is found in the periplasm. It carries out the reaction a beta-lactam + H2O = a substituted beta-amino acid. Its activity is regulated as follows. Weakly inhibited by beta-lactamase-blocking agent sulbactam. Functionally, class B beta-lactamase which confers resistance to the beta-lactam antibiotics, including penicillins, cephalosporins and carbapenems. Acts via hydrolysis of the beta-lactam ring. Has penicillin-, cephalosporin- and carbapenem-hydrolyzing activities. The polypeptide is Metallo-beta-lactamase VIM-1 (Pseudomonas aeruginosa (strain ATCC 15692 / DSM 22644 / CIP 104116 / JCM 14847 / LMG 12228 / 1C / PRS 101 / PAO1)).